The sequence spans 106 residues: uncharacterized protein (106 aa).

This is an uncharacterized protein from Pseudanabaena tenuis (strain PCC 7409).